The primary structure comprises 367 residues: Anthranilate phosphoribosyltransferase (367 aa).

The segment covering 1-17 has biased composition (low complexity); it reads MVLSSEASSAADHSAAA. A disordered region spans residues 1–22; that stretch reads MVLSSEASSAADHSAAAPIPTS. 5-phospho-alpha-D-ribose 1-diphosphate is bound by residues G104, 107–108, T112, 114–117, 132–140, and G144; these read GD, NLST, and KHGNRAASS. G104 contributes to the anthranilate binding site. Residue S116 coordinates Mg(2+). N135 provides a ligand contact to anthranilate. R190 is a binding site for anthranilate. Positions 248 and 249 each coordinate Mg(2+).

It belongs to the anthranilate phosphoribosyltransferase family. In terms of assembly, homodimer. Requires Mg(2+) as cofactor.

It carries out the reaction N-(5-phospho-beta-D-ribosyl)anthranilate + diphosphate = 5-phospho-alpha-D-ribose 1-diphosphate + anthranilate. Its pathway is amino-acid biosynthesis; L-tryptophan biosynthesis; L-tryptophan from chorismate: step 2/5. In terms of biological role, catalyzes the transfer of the phosphoribosyl group of 5-phosphorylribose-1-pyrophosphate (PRPP) to anthranilate to yield N-(5'-phosphoribosyl)-anthranilate (PRA). This Mycobacterium ulcerans (strain Agy99) protein is Anthranilate phosphoribosyltransferase.